Reading from the N-terminus, the 68-residue chain is Metallothionein (68 aa).

Cys-7, Cys-9, Cys-14, Cys-16, Cys-20, Cys-22, Cys-25, Cys-27, Cys-35, Cys-39, Cys-40, Cys-42, Cys-43, Cys-47, Cys-50, Cys-54, Cys-56, Cys-64, Cys-66, and Cys-67 together coordinate a divalent metal cation.

The protein belongs to the metallothionein superfamily. Type 1 family.

Functionally, metallothioneins have a high content of cysteine residues that bind various heavy metals. The polypeptide is Metallothionein (mt) (Scyliorhinus torazame (Cloudy catshark)).